A 353-amino-acid polypeptide reads, in one-letter code: MSIEDLARANVRALTPYQSARRLGGKGDVWLNANEFPTAVAFQLTAQTMNRYPEPQPKAVIESYARYADVKPEQVLVSRGADEGIELLIRAFCEPGKDALLYCPPTYGMYSVSAETIGVECRTVPTLADWQLDLPGIEAQLDGVKVVFVCSPNNPTGQIIDPQSIRDLLEMTRDKAIVVADEAYIEFCPQATLAGWLSDYPHLVVVRTLSKAFALAGLRCGFTLANAEVINVLLKVIAPYPLSTPVADIAAQALSAEGIAAMRQRVAQILDERRYLVEQLRGIACVEQVFDSEANYVLARITASSAVFKSLWDQGIILRDQNKQPSLSGCLRITIGTRAESQRVIDALTAENV.

Lys-211 is modified (N6-(pyridoxal phosphate)lysine).

Belongs to the class-II pyridoxal-phosphate-dependent aminotransferase family. Histidinol-phosphate aminotransferase subfamily. In terms of assembly, homodimer. Pyridoxal 5'-phosphate is required as a cofactor.

The catalysed reaction is L-histidinol phosphate + 2-oxoglutarate = 3-(imidazol-4-yl)-2-oxopropyl phosphate + L-glutamate. The protein operates within amino-acid biosynthesis; L-histidine biosynthesis; L-histidine from 5-phospho-alpha-D-ribose 1-diphosphate: step 7/9. The chain is Histidinol-phosphate aminotransferase from Klebsiella pneumoniae (strain 342).